The chain runs to 473 residues: Photosystem II CP43 reaction center protein (473 aa).

Residues M1–E14 constitute a propeptide that is removed on maturation. N-acetylthreonine is present on T15. T15 is modified (phosphothreonine). Helical transmembrane passes span L69 to A93, L134 to N155, K178 to T200, K255 to S275, and W291 to A312. E367 is a binding site for [CaMn4O5] cluster. The helical transmembrane segment at R447 to P471 threads the bilayer.

It belongs to the PsbB/PsbC family. PsbC subfamily. PSII is composed of 1 copy each of membrane proteins PsbA, PsbB, PsbC, PsbD, PsbE, PsbF, PsbH, PsbI, PsbJ, PsbK, PsbL, PsbM, PsbT, PsbX, PsbY, PsbZ, Psb30/Ycf12, at least 3 peripheral proteins of the oxygen-evolving complex and a large number of cofactors. It forms dimeric complexes. Binds multiple chlorophylls and provides some of the ligands for the Ca-4Mn-5O cluster of the oxygen-evolving complex. It may also provide a ligand for a Cl- that is required for oxygen evolution. PSII binds additional chlorophylls, carotenoids and specific lipids. is required as a cofactor.

It is found in the plastid. The protein localises to the chloroplast thylakoid membrane. One of the components of the core complex of photosystem II (PSII). It binds chlorophyll and helps catalyze the primary light-induced photochemical processes of PSII. PSII is a light-driven water:plastoquinone oxidoreductase, using light energy to abstract electrons from H(2)O, generating O(2) and a proton gradient subsequently used for ATP formation. The sequence is that of Photosystem II CP43 reaction center protein from Buxus microphylla (Littleleaf boxwood).